The chain runs to 87 residues: Cell division topological specificity factor (87 aa).

The protein belongs to the MinE family.

In terms of biological role, prevents the cell division inhibition by proteins MinC and MinD at internal division sites while permitting inhibition at polar sites. This ensures cell division at the proper site by restricting the formation of a division septum at the midpoint of the long axis of the cell. This is Cell division topological specificity factor from Roseiflexus sp. (strain RS-1).